The primary structure comprises 529 residues: Calcium-dependent protein kinase 3 (529 aa).

The tract at residues 1–73 (MGHRHSKSKS…GRILGRPMEE (73 aa)) is disordered. The N-myristoyl glycine moiety is linked to residue G2. Residues 39-53 (SGSGTVGSSGSGTGG) show a composition bias toward gly residues. A Protein kinase domain is found at 78 to 336 (YEFGRELGRG…AAEVLNHPWI (259 aa)). Residues 84-92 (LGRGQFGVT) and K107 contribute to the ATP site. The Proton acceptor role is filled by D202. S242 bears the Phosphoserine mark. The autoinhibitory domain stretch occupies residues 342 to 372 (ASDKPLDNAVLSRMKQFRAMNKLKKMALKVI). 4 consecutive EF-hand domains span residues 379 to 414 (EEII…LGSK), 415 to 450 (ISEA…MNRI), 451 to 485 (ERED…KYNM), and 486 to 521 (GDDK…GNPE). Positions 392, 394, 396, 403, 428, 430, 432, 434, 439, 464, 466, 468, 470, 475, 499, 501, 503, 505, and 510 each coordinate Ca(2+).

Belongs to the protein kinase superfamily. Ser/Thr protein kinase family. CDPK subfamily. Interacts with GHR1. As to expression, expressed in both guard cells and mesophyll cells.

The protein resides in the cytoplasm. Its subcellular location is the nucleus. It carries out the reaction L-seryl-[protein] + ATP = O-phospho-L-seryl-[protein] + ADP + H(+). It catalyses the reaction L-threonyl-[protein] + ATP = O-phospho-L-threonyl-[protein] + ADP + H(+). Its activity is regulated as follows. Activated by calcium. Autophosphorylation may play an important role in the regulation of the kinase activity. Functionally, may play a role in signal transduction pathways that involve calcium as a second messenger. Functions in abscisic acid (ABA) regulation of guard cell S-type anion- and Ca(2+)-permeable channels and stomatal closure. The protein is Calcium-dependent protein kinase 3 of Arabidopsis thaliana (Mouse-ear cress).